The primary structure comprises 267 residues: Octanoyltransferase (267 aa).

The BPL/LPL catalytic domain maps to 77-265 (GTASELVWLV…AFESVFGPRQ (189 aa)). Substrate-binding positions include 116–123 (RGGEYTYH), 196–198 (AIG), and 209–211 (GIA). Catalysis depends on Cys-227, which acts as the Acyl-thioester intermediate.

Belongs to the LipB family.

It is found in the cytoplasm. The catalysed reaction is octanoyl-[ACP] + L-lysyl-[protein] = N(6)-octanoyl-L-lysyl-[protein] + holo-[ACP] + H(+). Its pathway is protein modification; protein lipoylation via endogenous pathway; protein N(6)-(lipoyl)lysine from octanoyl-[acyl-carrier-protein]: step 1/2. In terms of biological role, catalyzes the transfer of endogenously produced octanoic acid from octanoyl-acyl-carrier-protein onto the lipoyl domains of lipoate-dependent enzymes. Lipoyl-ACP can also act as a substrate although octanoyl-ACP is likely to be the physiological substrate. This Brucella suis biovar 1 (strain 1330) protein is Octanoyltransferase.